The chain runs to 845 residues: Beta-glucosidase B (845 aa).

The N-linked (GlcNAc...) asparagine glycan is linked to Asn202. The active site involves Asp230. The N-linked (GlcNAc...) asparagine glycan is linked to Asn235. Positions 406–557 (EGQPGWTLDF…HNRDLLSEAV (152 aa)) constitute a PA14 domain. 3 N-linked (GlcNAc...) asparagine glycosylation sites follow: Asn591, Asn612, and Asn794.

This sequence belongs to the glycosyl hydrolase 3 family.

It catalyses the reaction Hydrolysis of terminal, non-reducing beta-D-glucosyl residues with release of beta-D-glucose.. It functions in the pathway glycan metabolism; cellulose degradation. Beta-glucosidases are one of a number of cellulolytic enzymes involved in the degradation of cellulosic biomass. Catalyzes the last step releasing glucose from the inhibitory cellobiose. The sequence is that of Beta-glucosidase B (bglB) from Emericella nidulans (strain FGSC A4 / ATCC 38163 / CBS 112.46 / NRRL 194 / M139) (Aspergillus nidulans).